The sequence spans 428 residues: Protein ECERIFERUM 26 (428 aa).

The tract at residues 1–36 (MGRSQEQGQGQGPVHSIRLSTVGATRPTETGTTHEP) is disordered. Positions 21–36 (TVGATRPTETGTTHEP) are enriched in low complexity.

Belongs to the plant acyltransferase family. Highly expressed in leaves.

The protein resides in the cytoplasm. It localises to the cytosol. Involved in biosynthesis of the epicuticular wax. Plays a role in very-long-chain fatty acid (VLCFA) biosynthesis and is required for C30 fatty acid elongation in leaf. Despite its classification as a BAHD acyltransferase based on sequence homology, CER26 does not seem to share the catalytic mechanism of the members of the BAHD family. This is Protein ECERIFERUM 26 (CER26) from Arabidopsis thaliana (Mouse-ear cress).